Consider the following 64-residue polypeptide: Putative neurotoxin-H (64 aa).

Positions 1–19 are cleaved as a signal peptide; it reads MYATVTVTVLLLISSGIFC. 3 cysteine pairs are disulfide-bonded: cysteine 25/cysteine 45, cysteine 32/cysteine 54, and cysteine 36/cysteine 56.

Expressed by the venom gland.

The protein resides in the secreted. The sequence is that of Putative neurotoxin-H from Lychas mucronatus (Chinese swimming scorpion).